Here is a 259-residue protein sequence, read N- to C-terminus: Type III pantothenate kinase (259 aa).

9–16 lines the ATP pocket; the sequence is DAGNSRIK. Substrate-binding positions include Tyr93 and 100 to 103; that span reads GSDR. The active-site Proton acceptor is Asp102. ATP is bound at residue Thr126. Residue Thr190 participates in substrate binding.

The protein belongs to the type III pantothenate kinase family. In terms of assembly, homodimer. NH4(+) serves as cofactor. The cofactor is K(+).

It localises to the cytoplasm. It carries out the reaction (R)-pantothenate + ATP = (R)-4'-phosphopantothenate + ADP + H(+). It participates in cofactor biosynthesis; coenzyme A biosynthesis; CoA from (R)-pantothenate: step 1/5. Catalyzes the phosphorylation of pantothenate (Pan), the first step in CoA biosynthesis. The chain is Type III pantothenate kinase from Burkholderia pseudomallei (strain K96243).